The chain runs to 152 residues: Transcriptional regulator MraZ (152 aa).

SpoVT-AbrB domains lie at 5-52 (ATMV…PLPE) and 81-124 (ASEC…DEQT).

This sequence belongs to the MraZ family. Forms oligomers.

It localises to the cytoplasm. The protein localises to the nucleoid. In terms of biological role, negatively regulates its own expression and that of the subsequent genes in the proximal part of the division and cell wall (dcw) gene cluster. Acts by binding directly to DNA. May also regulate the expression of genes outside the dcw cluster. The polypeptide is Transcriptional regulator MraZ (Yersinia pseudotuberculosis serotype O:1b (strain IP 31758)).